A 372-amino-acid polypeptide reads, in one-letter code: 4-hydroxy-3-methylbut-2-en-1-yl diphosphate synthase (flavodoxin) (372 aa).

[4Fe-4S] cluster is bound by residues cysteine 270, cysteine 273, cysteine 305, and glutamate 312.

This sequence belongs to the IspG family. Requires [4Fe-4S] cluster as cofactor.

It carries out the reaction (2E)-4-hydroxy-3-methylbut-2-enyl diphosphate + oxidized [flavodoxin] + H2O + 2 H(+) = 2-C-methyl-D-erythritol 2,4-cyclic diphosphate + reduced [flavodoxin]. Its pathway is isoprenoid biosynthesis; isopentenyl diphosphate biosynthesis via DXP pathway; isopentenyl diphosphate from 1-deoxy-D-xylulose 5-phosphate: step 5/6. Its function is as follows. Converts 2C-methyl-D-erythritol 2,4-cyclodiphosphate (ME-2,4cPP) into 1-hydroxy-2-methyl-2-(E)-butenyl 4-diphosphate. The sequence is that of 4-hydroxy-3-methylbut-2-en-1-yl diphosphate synthase (flavodoxin) from Salmonella paratyphi B (strain ATCC BAA-1250 / SPB7).